The primary structure comprises 387 residues: Protein kinase ORF16 (387 aa).

Residues 82-381 (KKILSRVGPE…VTLMTELSLL (300 aa)) form the Protein kinase domain. Residue K122 participates in ATP binding. D226 serves as the catalytic Proton acceptor.

It belongs to the protein kinase superfamily. Ser/Thr protein kinase family.

It catalyses the reaction L-seryl-[protein] + ATP = O-phospho-L-seryl-[protein] + ADP + H(+). The catalysed reaction is L-threonyl-[protein] + ATP = O-phospho-L-threonyl-[protein] + ADP + H(+). The chain is Protein kinase ORF16 (ORF16) from Ictalurid herpesvirus 1 (strain Auburn) (IcHV-1).